The following is a 397-amino-acid chain: Tryptophan synthase beta chain (397 aa).

Lysine 87 is modified (N6-(pyridoxal phosphate)lysine).

It belongs to the TrpB family. Tetramer of two alpha and two beta chains. Pyridoxal 5'-phosphate is required as a cofactor.

It catalyses the reaction (1S,2R)-1-C-(indol-3-yl)glycerol 3-phosphate + L-serine = D-glyceraldehyde 3-phosphate + L-tryptophan + H2O. It functions in the pathway amino-acid biosynthesis; L-tryptophan biosynthesis; L-tryptophan from chorismate: step 5/5. Its function is as follows. The beta subunit is responsible for the synthesis of L-tryptophan from indole and L-serine. The protein is Tryptophan synthase beta chain of Salmonella arizonae (strain ATCC BAA-731 / CDC346-86 / RSK2980).